Here is a 324-residue protein sequence, read N- to C-terminus: NADH-ubiquinone oxidoreductase chain 1 (324 aa).

9 helical membrane passes run 9-29 (IINP…LTLL), 43-63 (PNIV…KLFI), 75-95 (FLFL…WAPM), 106-126 (LGVL…LGSG), 146-166 (ISYE…TGGF), 177-197 (SIWL…STLA), 237-257 (ILLM…IPAF), 259-279 (ELTA…FLWV), and 299-319 (FLPL…AMAG).

This sequence belongs to the complex I subunit 1 family.

The protein resides in the mitochondrion inner membrane. The catalysed reaction is a ubiquinone + NADH + 5 H(+)(in) = a ubiquinol + NAD(+) + 4 H(+)(out). Core subunit of the mitochondrial membrane respiratory chain NADH dehydrogenase (Complex I) that is believed to belong to the minimal assembly required for catalysis. Complex I functions in the transfer of electrons from NADH to the respiratory chain. The immediate electron acceptor for the enzyme is believed to be ubiquinone. The chain is NADH-ubiquinone oxidoreductase chain 1 (MT-ND1) from Salmo salar (Atlantic salmon).